A 106-amino-acid chain; its full sequence is MTSATQFDNVSVVKRANVYFDGKCVSHTVLFPDGTRKTLGVILPCALNFGTDAPELMEVQAGKCRVKLAGSSEWQTYGAGESFSVPGNSRFDIEVLDTLDYVCSYL.

It belongs to the nucleoside phosphorylase PpnP family.

The enzyme catalyses a purine D-ribonucleoside + phosphate = a purine nucleobase + alpha-D-ribose 1-phosphate. The catalysed reaction is adenosine + phosphate = alpha-D-ribose 1-phosphate + adenine. It catalyses the reaction cytidine + phosphate = cytosine + alpha-D-ribose 1-phosphate. It carries out the reaction guanosine + phosphate = alpha-D-ribose 1-phosphate + guanine. The enzyme catalyses inosine + phosphate = alpha-D-ribose 1-phosphate + hypoxanthine. The catalysed reaction is thymidine + phosphate = 2-deoxy-alpha-D-ribose 1-phosphate + thymine. It catalyses the reaction uridine + phosphate = alpha-D-ribose 1-phosphate + uracil. It carries out the reaction xanthosine + phosphate = alpha-D-ribose 1-phosphate + xanthine. In terms of biological role, catalyzes the phosphorolysis of diverse nucleosides, yielding D-ribose 1-phosphate and the respective free bases. Can use uridine, adenosine, guanosine, cytidine, thymidine, inosine and xanthosine as substrates. Also catalyzes the reverse reactions. The chain is Pyrimidine/purine nucleoside phosphorylase from Burkholderia vietnamiensis (strain G4 / LMG 22486) (Burkholderia cepacia (strain R1808)).